The chain runs to 708 residues: G-box-binding factor (708 aa).

Disordered regions lie at residues 1–29 (MLSTHHHQGNSSSSSSSSSPSQTIGGSDL) and 123–339 (QQAQ…QTIP). Composition is skewed to low complexity over residues 11–21 (SSSSSSSSSPS), 123–219 (QQAQ…QHHQ), and 227–316 (SQPQ…SPST). A compositionally biased stretch (basic and acidic residues) spans 324–333 (ETSNSEKKDS). Repeat copies occupy residues 339–368 (PKCTRCNEAASWKHDKRRWWCKECKKAFTP) and 481–510 (PPCPLCRGISSWKHDKKRYFCKECKKPFTP). The tract at residues 511–604 (VGAGLSPSSS…PTYSPNPSLP (94 aa)) is disordered. Positions 516–590 (SPSSSPSSPK…SSISQSPLQL (75 aa)) are enriched in low complexity. Residues 591–600 (NYQTPTYSPN) are compositionally biased toward polar residues.

Its subcellular location is the nucleus. Its function is as follows. cAMP-responsive transcriptional activator regulating late gene expression. Essential component of the developmental switch between early and late development. Binds to a number of CA/GT-rich gene regulatory elements. The protein is G-box-binding factor (gbfA) of Dictyostelium discoideum (Social amoeba).